The sequence spans 361 residues: MLNINIEKQLGQLQLKVNTQLPLQGVTAVFGRSGAGKTSLVNLLGGLTTPDKGEISLGDTLLFKHKTVNLPPEKRRIGYVFQEARLFPHYSVNGNLTYGMRHKTPELFDKVVSLLGIEKLLSRYPSTLSGGEKQRVAIGRALLTSPQMLLMDEPLASLDLPRKRELLPYLQTLAQELKLPIVYVSHSLDEILQLADHMLVLHQGKMIAQGPLTQVWNSEQMRPWVPLQELSSLLSARIADRHPDYPMTRLLMDDGNQLWVSGQLPPTHKQLKVRIQANHVSVCTEEPKGSSVRNLLRGKIKELYPSDNGEQIQLKIALGKDELWANITPWARDELQLIPGKAIYAQIKGVTMTQMDIAESH.

The ABC transporter domain maps to 1–228 (MLNINIEKQL…EQMRPWVPLQ (228 aa)). ATP is bound at residue 31–38 (GRSGAGKT). The region spanning 289–356 (GSSVRNLLRG…IKGVTMTQMD (68 aa)) is the Mop domain.

This sequence belongs to the ABC transporter superfamily. Molybdate importer (TC 3.A.1.8) family. In terms of assembly, the complex is composed of two ATP-binding proteins (ModC), two transmembrane proteins (ModB) and a solute-binding protein (ModA).

The protein resides in the cell inner membrane. The catalysed reaction is molybdate(out) + ATP + H2O = molybdate(in) + ADP + phosphate + H(+). Part of the ABC transporter complex ModABC involved in molybdenum import. Responsible for energy coupling to the transport system. This Shewanella sp. (strain MR-7) protein is Molybdenum import ATP-binding protein ModC.